The sequence spans 165 residues: Protein SprT (165 aa).

Residues 20–163 enclose the SprT-like domain; sequence ENLAQANLKL…RCVHCGEPLV (144 aa). Zn(2+) is bound at residue H78. E79 is a catalytic residue. Zn(2+) is bound at residue H82.

The protein belongs to the SprT family. The cofactor is Zn(2+).

Its subcellular location is the cytoplasm. The sequence is that of Protein SprT from Salmonella arizonae (strain ATCC BAA-731 / CDC346-86 / RSK2980).